The chain runs to 154 residues: Cyanate hydratase (154 aa).

Catalysis depends on residues arginine 100, glutamate 103, and serine 126.

The protein belongs to the cyanase family.

It carries out the reaction cyanate + hydrogencarbonate + 3 H(+) = NH4(+) + 2 CO2. Functionally, catalyzes the reaction of cyanate with bicarbonate to produce ammonia and carbon dioxide. The sequence is that of Cyanate hydratase from Aspergillus terreus (strain NIH 2624 / FGSC A1156).